Reading from the N-terminus, the 282-residue chain is Parvulin-like PPIase (282 aa).

The signal sequence occupies residues 1 to 20 (MKKLSVIFLSVSMLSGIAFA). A PpiC domain is found at 138–231 (KEQIKVAHIL…FGWHIIKVLE (94 aa)).

The protein belongs to the PpiC/parvulin rotamase family.

The protein resides in the cell outer membrane. It carries out the reaction [protein]-peptidylproline (omega=180) = [protein]-peptidylproline (omega=0). The protein is Parvulin-like PPIase (plp) of Rickettsia felis (strain ATCC VR-1525 / URRWXCal2) (Rickettsia azadi).